We begin with the raw amino-acid sequence, 100 residues long: Small ribosomal subunit protein uS14c (100 aa).

This sequence belongs to the universal ribosomal protein uS14 family. Part of the 30S ribosomal subunit.

The protein resides in the plastid. The protein localises to the chloroplast. Functionally, binds 16S rRNA, required for the assembly of 30S particles. In Guillardia theta (Cryptophyte), this protein is Small ribosomal subunit protein uS14c.